A 330-amino-acid polypeptide reads, in one-letter code: RNA polymerase sigma factor RpoS (330 aa).

The sigma-70 factor domain-1 stretch occupies residues 56 to 89 (DATQLYLGEIGYSPLLTAEEEVYFARRALRGDVA). The sigma-70 factor domain-2 stretch occupies residues 94-164 (MIESNLRLVV…ERAIMNQTRT (71 aa)). The Interaction with polymerase core subunit RpoC motif lies at 118 to 121 (DLIE). The interval 174–249 (ELNVYLRTAR…DEKENGPEDT (76 aa)) is sigma-70 factor domain-3. A sigma-70 factor domain-4 region spans residues 262–315 (WLFELNAKQREVLARRFGLLGYEAATLEDVGREIGLTRERVRQIQVEGLRRLRE). Residues 288–307 (LEDVGREIGLTRERVRQIQV) constitute a DNA-binding region (H-T-H motif).

This sequence belongs to the sigma-70 factor family. RpoS subfamily. As to quaternary structure, interacts with the RNA polymerase core enzyme.

Its subcellular location is the cytoplasm. Functionally, sigma factors are initiation factors that promote the attachment of RNA polymerase to specific initiation sites and are then released. This sigma factor is the master transcriptional regulator of the stationary phase and the general stress response. The protein is RNA polymerase sigma factor RpoS of Salmonella dublin.